The chain runs to 441 residues: Ribosomal protein uS12 methylthiotransferase RimO (441 aa).

The region spanning 8–118 (PKIGFVSLGC…VLQHVHHYVP (111 aa)) is the MTTase N-terminal domain. 6 residues coordinate [4Fe-4S] cluster: C17, C53, C82, C150, C154, and C157. In terms of domain architecture, Radical SAM core spans 136-373 (LTPRHYAYLK…MQLQQQISAE (238 aa)). Residues 376–441 (QEKVGREILV…DEYDLWGSRV (66 aa)) form the TRAM domain.

The protein belongs to the methylthiotransferase family. RimO subfamily. It depends on [4Fe-4S] cluster as a cofactor.

The protein resides in the cytoplasm. The catalysed reaction is L-aspartate(89)-[ribosomal protein uS12]-hydrogen + (sulfur carrier)-SH + AH2 + 2 S-adenosyl-L-methionine = 3-methylsulfanyl-L-aspartate(89)-[ribosomal protein uS12]-hydrogen + (sulfur carrier)-H + 5'-deoxyadenosine + L-methionine + A + S-adenosyl-L-homocysteine + 2 H(+). Functionally, catalyzes the methylthiolation of an aspartic acid residue of ribosomal protein uS12. This is Ribosomal protein uS12 methylthiotransferase RimO from Salmonella paratyphi B (strain ATCC BAA-1250 / SPB7).